The primary structure comprises 324 residues: Phospho-N-acetylmuramoyl-pentapeptide-transferase (324 aa).

9 helical membrane-spanning segments follow: residues 5 to 25 (VILF…PIFI), 51 to 71 (TPTM…IVMI), 77 to 97 (ISPE…LGFL), 117 to 137 (LIGQ…YQFA), 147 to 167 (VSFD…VGGS), 176 to 196 (LDGL…ILAW), 203 to 223 (VAIF…FNAH), 227 to 248 (VFMG…AILT), and 302 to 322 (VVVT…YIEV).

It belongs to the glycosyltransferase 4 family. MraY subfamily. Mg(2+) is required as a cofactor.

Its subcellular location is the cell membrane. It catalyses the reaction UDP-N-acetyl-alpha-D-muramoyl-L-alanyl-gamma-D-glutamyl-meso-2,6-diaminopimeloyl-D-alanyl-D-alanine + di-trans,octa-cis-undecaprenyl phosphate = di-trans,octa-cis-undecaprenyl diphospho-N-acetyl-alpha-D-muramoyl-L-alanyl-D-glutamyl-meso-2,6-diaminopimeloyl-D-alanyl-D-alanine + UMP. It functions in the pathway cell wall biogenesis; peptidoglycan biosynthesis. Catalyzes the initial step of the lipid cycle reactions in the biosynthesis of the cell wall peptidoglycan: transfers peptidoglycan precursor phospho-MurNAc-pentapeptide from UDP-MurNAc-pentapeptide onto the lipid carrier undecaprenyl phosphate, yielding undecaprenyl-pyrophosphoryl-MurNAc-pentapeptide, known as lipid I. This Bacillus pumilus (strain SAFR-032) protein is Phospho-N-acetylmuramoyl-pentapeptide-transferase.